Consider the following 178-residue polypeptide: Small ribosomal subunit protein uS5 (178 aa).

The S5 DRBM domain occupies 13–76 (LEERVVQINR…EAAKRNLIRV (64 aa)). Positions 156-178 (ASRRDMTPQELMERRTRRETEAA) are disordered.

It belongs to the universal ribosomal protein uS5 family. As to quaternary structure, part of the 30S ribosomal subunit. Contacts proteins S4 and S8.

With S4 and S12 plays an important role in translational accuracy. Its function is as follows. Located at the back of the 30S subunit body where it stabilizes the conformation of the head with respect to the body. In Chloroflexus aurantiacus (strain ATCC 29364 / DSM 637 / Y-400-fl), this protein is Small ribosomal subunit protein uS5.